The chain runs to 124 residues: Apolipoprotein C-IV (124 aa).

Residues Met-1–Ser-27 form the signal peptide. Asn-107 is a glycosylation site (N-linked (GlcNAc...) asparagine).

This sequence belongs to the apolipoprotein C4 family. In terms of tissue distribution, expressed by the liver and secreted in plasma.

The protein resides in the secreted. Its function is as follows. May participate in lipoprotein metabolism. The polypeptide is Apolipoprotein C-IV (Apoc4) (Mus musculus (Mouse)).